The chain runs to 224 residues: 7-cyano-7-deazaguanine synthase (224 aa).

Residue 10–20 (LSGGLDSATVA) participates in ATP binding. 4 residues coordinate Zn(2+): C189, C199, C202, and C205.

Belongs to the QueC family. Zn(2+) is required as a cofactor.

It catalyses the reaction 7-carboxy-7-deazaguanine + NH4(+) + ATP = 7-cyano-7-deazaguanine + ADP + phosphate + H2O + H(+). Its pathway is purine metabolism; 7-cyano-7-deazaguanine biosynthesis. Its function is as follows. Catalyzes the ATP-dependent conversion of 7-carboxy-7-deazaguanine (CDG) to 7-cyano-7-deazaguanine (preQ(0)). The protein is 7-cyano-7-deazaguanine synthase of Azotobacter vinelandii (strain DJ / ATCC BAA-1303).